A 338-amino-acid chain; its full sequence is MLISQRPTITEEFVNNARSRFVIEPLEPGFGYTLGNSLRRTLLSSIPGAAVTSVKIDGVLHEFTTISGVKEDVSDIILNIKGLVLSSDSDEPVVMQLVKEGPGVVTAGDIQPPAGVEIHNPDLHIATLNETAKIEIELIVERGRGYVPATVTATGGEIGRIPVDQIYSPVLKVSYKVEATRVEQRTDFDKLVIDVETKNSITARDALASAGKTLVELFGLARELNIAAEGIEIGPSPQETEYIAAYSMPIEDLDFSVRSYNCLKREDIHTVGELAERAESDLLDIRNFGQKSINEVKIKLAGLGLTLKDAPEDFDPSTLEGYDAETGGYIDVEAEDSE.

An alpha N-terminal domain (alpha-NTD) region spans residues 1-225; sequence MLISQRPTIT…ELFGLARELN (225 aa). Residues 242 to 338 form an alpha C-terminal domain (alpha-CTD) region; sequence YIAAYSMPIE…YIDVEAEDSE (97 aa). A disordered region spans residues 319–338; it reads LEGYDAETGGYIDVEAEDSE.

This sequence belongs to the RNA polymerase alpha chain family. As to quaternary structure, homodimer. The RNAP catalytic core consists of 2 alpha, 1 beta, 1 beta' and 1 omega subunit. When a sigma factor is associated with the core the holoenzyme is formed, which can initiate transcription.

It carries out the reaction RNA(n) + a ribonucleoside 5'-triphosphate = RNA(n+1) + diphosphate. DNA-dependent RNA polymerase catalyzes the transcription of DNA into RNA using the four ribonucleoside triphosphates as substrates. In Corynebacterium glutamicum (strain ATCC 13032 / DSM 20300 / JCM 1318 / BCRC 11384 / CCUG 27702 / LMG 3730 / NBRC 12168 / NCIMB 10025 / NRRL B-2784 / 534), this protein is DNA-directed RNA polymerase subunit alpha.